A 93-amino-acid chain; its full sequence is Acylphosphatase (93 aa).

The Acylphosphatase-like domain maps to 7 to 93; it reads RLTAWVHGWV…TEQITGFSER (87 aa). Catalysis depends on residues Arg-22 and Asn-40.

This sequence belongs to the acylphosphatase family.

The catalysed reaction is an acyl phosphate + H2O = a carboxylate + phosphate + H(+). The polypeptide is Acylphosphatase (acyP) (Mycobacterium tuberculosis (strain ATCC 25177 / H37Ra)).